Consider the following 226-residue polypeptide: UPF0758 protein Daro_3142 (226 aa).

The region spanning S103 to L226 is the MPN domain. 3 residues coordinate Zn(2+): H174, H176, and D187. Residues H174–D187 carry the JAMM motif motif.

The protein belongs to the UPF0758 family.

This chain is UPF0758 protein Daro_3142, found in Dechloromonas aromatica (strain RCB).